Consider the following 231-residue polypeptide: Regulatory factor X-associated protein (231 aa).

The interval 1-163 is disordered; the sequence is MEAQAVPEGS…GNVKLEESTD (163 aa). Over residues 50–65 the composition is skewed to acidic residues; the sequence is ADAEDEAGDDDADLLD. The segment covering 115 to 138 has biased composition (basic residues); the sequence is KQRKPWMCKKHRNKMYKDKYKKKK. Residues 123–138 carry the Nuclear localization signal motif; it reads KKHRNKMYKDKYKKKK. Residue K157 forms a Glycyl lysine isopeptide (Lys-Gly) (interchain with G-Cter in SUMO2) linkage.

In terms of assembly, RFX consists of at least 3 different subunits; RFXAP, RFX5 and RFX-B/RFXANK; with each subunit representing a separate complementation group. RFX forms cooperative DNA binding complexes with X2BP and CBF/NF-Y. RFX associates with CIITA to form an active transcriptional complex. Phosphorylated.

Its subcellular location is the nucleus. Part of the RFX complex that binds to the X-box of MHC II promoters. In Mus musculus (Mouse), this protein is Regulatory factor X-associated protein (Rfxap).